The primary structure comprises 961 residues: Valine--tRNA ligase (961 aa).

Positions 48 to 58 (PNVTGSLHMGH) match the 'HIGH' region motif. Positions 560 to 564 (KMSKS) match the 'KMSKS' region motif. Residue Lys563 participates in ATP binding. Positions 892–961 (FINKDTELAR…QAQFKAIEAL (70 aa)) form a coiled coil.

This sequence belongs to the class-I aminoacyl-tRNA synthetase family. ValS type 1 subfamily. Monomer.

It is found in the cytoplasm. The catalysed reaction is tRNA(Val) + L-valine + ATP = L-valyl-tRNA(Val) + AMP + diphosphate. Its function is as follows. Catalyzes the attachment of valine to tRNA(Val). As ValRS can inadvertently accommodate and process structurally similar amino acids such as threonine, to avoid such errors, it has a 'posttransfer' editing activity that hydrolyzes mischarged Thr-tRNA(Val) in a tRNA-dependent manner. This chain is Valine--tRNA ligase, found in Haemophilus ducreyi (strain 35000HP / ATCC 700724).